The following is a 199-amino-acid chain: Cytosine-containing mismatch-binding protein 1 (199 aa).

The segment at residues 123 to 197 (PKKPSSAFIL…QYDKFMKEAG (75 aa)) is a DNA-binding region (HMG box).

Monomer.

Its subcellular location is the nucleus. Binds to cytosines in base mismatches and opposite chemically altered guanines. May be involved in repair of DNA damage. In Schizosaccharomyces pombe (strain 972 / ATCC 24843) (Fission yeast), this protein is Cytosine-containing mismatch-binding protein 1.